The sequence spans 445 residues: Argininosuccinate synthase (445 aa).

Residues 17–25 (AFSGGLDTS) and Ala-43 each bind ATP. Tyr-99 is an L-citrulline binding site. 2 residues coordinate ATP: Gly-129 and Thr-131. L-aspartate-binding residues include Thr-131, Asn-135, and Asp-136. Position 135 (Asn-135) interacts with L-citrulline. ATP is bound at residue Asp-136. L-citrulline contacts are provided by Arg-139 and Ser-192. Asp-194 is a binding site for ATP. Residues Thr-201, Glu-203, and Glu-280 each contribute to the L-citrulline site.

Belongs to the argininosuccinate synthase family. Type 2 subfamily. As to quaternary structure, homotetramer.

It is found in the cytoplasm. It carries out the reaction L-citrulline + L-aspartate + ATP = 2-(N(omega)-L-arginino)succinate + AMP + diphosphate + H(+). The protein operates within amino-acid biosynthesis; L-arginine biosynthesis; L-arginine from L-ornithine and carbamoyl phosphate: step 2/3. This Bordetella pertussis (strain Tohama I / ATCC BAA-589 / NCTC 13251) protein is Argininosuccinate synthase.